The following is a 240-amino-acid chain: UDP-2,3-diacylglucosamine hydrolase (240 aa).

Residues Asp8, His10, Asp41, Asn79, and His114 each coordinate Mn(2+). 79–80 (NR) contributes to the substrate binding site. 5 residues coordinate substrate: Asp122, Ser160, Asn164, Lys167, and His195. Residues His195 and His197 each coordinate Mn(2+).

It belongs to the LpxH family. The cofactor is Mn(2+).

Its subcellular location is the cell inner membrane. It catalyses the reaction UDP-2-N,3-O-bis[(3R)-3-hydroxytetradecanoyl]-alpha-D-glucosamine + H2O = 2-N,3-O-bis[(3R)-3-hydroxytetradecanoyl]-alpha-D-glucosaminyl 1-phosphate + UMP + 2 H(+). The protein operates within glycolipid biosynthesis; lipid IV(A) biosynthesis; lipid IV(A) from (3R)-3-hydroxytetradecanoyl-[acyl-carrier-protein] and UDP-N-acetyl-alpha-D-glucosamine: step 4/6. In terms of biological role, hydrolyzes the pyrophosphate bond of UDP-2,3-diacylglucosamine to yield 2,3-diacylglucosamine 1-phosphate (lipid X) and UMP by catalyzing the attack of water at the alpha-P atom. Involved in the biosynthesis of lipid A, a phosphorylated glycolipid that anchors the lipopolysaccharide to the outer membrane of the cell. The sequence is that of UDP-2,3-diacylglucosamine hydrolase from Pectobacterium atrosepticum (strain SCRI 1043 / ATCC BAA-672) (Erwinia carotovora subsp. atroseptica).